The chain runs to 1441 residues: Tyrosine-protein kinase BAZ1B (1441 aa).

In terms of domain architecture, WAC spans 26–132 (EEVYMIEHSK…GEECDFEVGP (107 aa)). Residues 147-171 (EKEEQASEKKSEGSCDSPSSDKENS) show a composition bias toward basic and acidic residues. Disordered regions lie at residues 147–212 (EKEE…SLKK), 307–338 (NPSS…PSSW), 364–445 (NLNK…NKYL), and 531–555 (RIKE…KRYE). Residues 386–397 (QVLNGQKISAKT) are compositionally biased toward polar residues. Residues 398-408 (RSPKKGLKSPK) are compositionally biased toward basic residues. A compositionally biased stretch (polar residues) spans 430–441 (GGSNTPRSSSKP). Residues 513–558 (TEEQREEYMRKKREALKARIKEKTRERKQKEREERLEKQKRYEDQD) are a coiled coil. Residues 578 to 642 (NALFGDVAMV…LQTLLQDEIA (65 aa)) form the DDT domain. 4 disordered regions span residues 675–696 (SPAG…SAVY), 766–785 (DKKR…KPKE), 823–858 (QAKK…AEKA), and 911–949 (PESK…ETTV). Acidic residues predominate over residues 686–696 (GDEDSEGSAVY). Composition is skewed to basic and acidic residues over residues 776–785 (KEQGTVKPKE), 824–858 (AKKE…AEKA), and 937–946 (STQREEKHAE). Residues 813 to 861 (AVKSRRLQAMQAKKEKEEHEKLTKERIERETEEERSRKQKASAEKAFHE) are a coiled coil. A coiled-coil region spans residues 1080–1113 (APKQKKRKHQSEEAAAKAEEQDEEKKMAEEAKVA). Residues 1151 to 1201 (NARCKVCRKKGEDDKLILCDECNKAFHLFCLRPVLFNIPDGEWLCPACQPA) form a PHD-type zinc finger. Disordered regions lie at residues 1204–1308 (RRSS…RQNQ) and 1408–1441 (HLPA…KQKK). Positions 1213–1253 (AEDSTQDEDEEEEEEESEEEEEEESDEEEEEQEMMGQRLRS) form a coiled coil. The span at 1216–1245 (STQDEDEEEEEEESEEEEEEESDEEEEEQE) shows a compositional bias: acidic residues. Residues 1251 to 1270 (LRSRKAAKGKPGRPTRRGRP) show a composition bias toward basic residues. Residues 1299–1308 (SKPTSRRQNQ) show a composition bias toward polar residues. A Bromo domain is found at 1304-1408 (RRQNQEFQKC…QCARDLLGKH (105 aa)).

This sequence belongs to the WAL family. BAZ1B subfamily. As to quaternary structure, interacts with smarca5/snf2h; the interaction is direct and forms the WICH complex. Component of the B-WICH complex. It depends on Mn(2+) as a cofactor. As to expression, highly expressed in the neural tube.

It localises to the nucleus. It catalyses the reaction L-tyrosyl-[protein] + ATP = O-phospho-L-tyrosyl-[protein] + ADP + H(+). Functionally, atypical tyrosine-protein kinase that plays a central role in chromatin remodeling and acts as a transcription regulator. Involved in DNA damage response by phosphorylating 'Tyr-142' of histone H2AX (H2AXY142ph). H2AXY142ph plays a central role in DNA repair and acts as a mark that distinguishes between apoptotic and repair responses to genotoxic stress. Essential component of the WICH complex, a chromatin remodeling complex that mobilizes nucleosomes and reconfigures irregular chromatin to a regular nucleosomal array structure. The WICH complex regulates the transcription of various genes, has a role in RNA polymerase I and RNA polymerase III transcription, mediates the histone H2AX phosphorylation at 'Tyr-142', and is involved in the maintenance of chromatin structures during DNA replication processes. In Xenopus laevis (African clawed frog), this protein is Tyrosine-protein kinase BAZ1B (baz1b).